A 347-amino-acid polypeptide reads, in one-letter code: MKDENSINFLSSNENYLYDKSENELRPKVFEDFKGQANVKETLSIFIRASKERDEALDHVFLSGPPGLGKTTLASIIAFEMNASIKITSAPAFDKPKDIIGILTGLDEKSVLFIDEIHRLRPIIEEMLCIAMEDYELDWVIGQGANARTVRMPLPKFTLIGATTKPGKVTSPLYARFGITARFELYSEIELVEIIKRNSIILNIEIEEDAAFLLARSSRGTPRIANRLLRRIRDIAQVTGSLVVTSDIVAIGLEMLRIDGEGLDEQDRNILRSLILKFNGGPVGVDTLAISVGETADSLEDFYEPYLIMKGFISRTHRGRKATEFAYLHLNLEMKEDNLNENQRVSF.

A large ATPase domain (RuvB-L) region spans residues 1 to 186; the sequence is MKDENSINFL…FGITARFELY (186 aa). Residues L25, R26, G67, K70, T71, T72, 133 to 135, R176, Y186, and R223 contribute to the ATP site; that span reads EDY. T71 lines the Mg(2+) pocket. Residues 187–257 are small ATPAse domain (RuvB-S); it reads SEIELVEIIK…IVAIGLEMLR (71 aa). A head domain (RuvB-H) region spans residues 260–347; it reads GEGLDEQDRN…NLNENQRVSF (88 aa). R315 and R320 together coordinate DNA.

Belongs to the RuvB family. Homohexamer. Forms an RuvA(8)-RuvB(12)-Holliday junction (HJ) complex. HJ DNA is sandwiched between 2 RuvA tetramers; dsDNA enters through RuvA and exits via RuvB. An RuvB hexamer assembles on each DNA strand where it exits the tetramer. Each RuvB hexamer is contacted by two RuvA subunits (via domain III) on 2 adjacent RuvB subunits; this complex drives branch migration. In the full resolvosome a probable DNA-RuvA(4)-RuvB(12)-RuvC(2) complex forms which resolves the HJ.

It is found in the cytoplasm. It carries out the reaction ATP + H2O = ADP + phosphate + H(+). In terms of biological role, the RuvA-RuvB-RuvC complex processes Holliday junction (HJ) DNA during genetic recombination and DNA repair, while the RuvA-RuvB complex plays an important role in the rescue of blocked DNA replication forks via replication fork reversal (RFR). RuvA specifically binds to HJ cruciform DNA, conferring on it an open structure. The RuvB hexamer acts as an ATP-dependent pump, pulling dsDNA into and through the RuvAB complex. RuvB forms 2 homohexamers on either side of HJ DNA bound by 1 or 2 RuvA tetramers; 4 subunits per hexamer contact DNA at a time. Coordinated motions by a converter formed by DNA-disengaged RuvB subunits stimulates ATP hydrolysis and nucleotide exchange. Immobilization of the converter enables RuvB to convert the ATP-contained energy into a lever motion, pulling 2 nucleotides of DNA out of the RuvA tetramer per ATP hydrolyzed, thus driving DNA branch migration. The RuvB motors rotate together with the DNA substrate, which together with the progressing nucleotide cycle form the mechanistic basis for DNA recombination by continuous HJ branch migration. Branch migration allows RuvC to scan DNA until it finds its consensus sequence, where it cleaves and resolves cruciform DNA. This Borreliella afzelii (strain PKo) (Borrelia afzelii) protein is Holliday junction branch migration complex subunit RuvB.